Consider the following 399-residue polypeptide: Lysosomal acid lipase/cholesteryl ester hydrolase (399 aa).

Residues 1-27 (MKMRFLGLVVCLVLWTLHSEASGGKLT) form the signal peptide. The propeptide at 28–76 (AVNPETNMNVSEIISYWGFPSEEYLVETEDGYILCLNRIPHGRKNHSDK) is removed in mature form. 4 N-linked (GlcNAc...) asparagine glycosylation sites follow: N36, N72, N101, and N161. One can recognise an AB hydrolase-1 domain in the interval 80–380 (PVVFLQHGLL…EWEHLDFIWG (301 aa)). S174 (charge relay system) is an active-site residue. N-linked (GlcNAc...) asparagine glycosylation is found at N273 and N321. The active-site Charge relay system is the H374.

Belongs to the AB hydrolase superfamily. Lipase family. In terms of assembly, monomer. Post-translationally, glycosylation is not essential for catalytic activity.

It localises to the lysosome. The catalysed reaction is a sterol ester + H2O = a sterol + a fatty acid + H(+). It catalyses the reaction cholesteryl (9Z-octadecenoate) + H2O = cholesterol + (9Z)-octadecenoate + H(+). It carries out the reaction a triacylglycerol + H2O = a 1,2-diacylglycerol + a fatty acid + H(+). The enzyme catalyses 1,2-di-(9Z-octadecenoyl)-glycerol + (9Z)-octadecenoate + H(+) = 1,2,3-tri-(9Z-octadecenoyl)-glycerol + H2O. The catalysed reaction is a 1,2-diacylglycerol + H2O = a 1-acylglycerol + a fatty acid + H(+). It catalyses the reaction 1,2-di-(9Z-octadecenoyl)-glycerol + H2O = 1-(9Z-octadecenoyl)-glycerol + (9Z)-octadecenoate + H(+). It carries out the reaction a 1,3-diacylglycerol + H2O = a 1-acylglycerol + a fatty acid + H(+). The enzyme catalyses 1,3-di-(9Z-octadecenoyl)-glycerol + H2O = 1-(9Z-octadecenoyl)-glycerol + (9Z)-octadecenoate + H(+). In terms of biological role, catalyzes the deacylation of cholesteryl ester core lipids of endocytosed low density lipoproteins to generate free fatty acids and cholesterol. Hydrolyzes triglycerides (1,2,3-triacylglycerol) and diglycerides (such as 1,2-diacylglycerol and 1,3-diacylglycerol) with preference for the acyl moieties at the sn-1 or sn-3 positions. This Macaca fascicularis (Crab-eating macaque) protein is Lysosomal acid lipase/cholesteryl ester hydrolase (LIPA).